A 446-amino-acid chain; its full sequence is Methylenetetrahydrofolate--tRNA-(uracil-5-)-methyltransferase TrmFO (446 aa).

8-13 (GGGLAG) serves as a coordination point for FAD.

The protein belongs to the MnmG family. TrmFO subfamily. FAD serves as cofactor.

It localises to the cytoplasm. It catalyses the reaction uridine(54) in tRNA + (6R)-5,10-methylene-5,6,7,8-tetrahydrofolate + NADH + H(+) = 5-methyluridine(54) in tRNA + (6S)-5,6,7,8-tetrahydrofolate + NAD(+). The catalysed reaction is uridine(54) in tRNA + (6R)-5,10-methylene-5,6,7,8-tetrahydrofolate + NADPH + H(+) = 5-methyluridine(54) in tRNA + (6S)-5,6,7,8-tetrahydrofolate + NADP(+). Its function is as follows. Catalyzes the folate-dependent formation of 5-methyl-uridine at position 54 (M-5-U54) in all tRNAs. In Zymomonas mobilis subsp. mobilis (strain ATCC 31821 / ZM4 / CP4), this protein is Methylenetetrahydrofolate--tRNA-(uracil-5-)-methyltransferase TrmFO.